A 455-amino-acid polypeptide reads, in one-letter code: Kynurenine 3-monooxygenase (455 aa).

It belongs to the aromatic-ring hydroxylase family. KMO subfamily. The cofactor is FAD.

It catalyses the reaction L-kynurenine + NADPH + O2 + H(+) = 3-hydroxy-L-kynurenine + NADP(+) + H2O. It functions in the pathway cofactor biosynthesis; NAD(+) biosynthesis; quinolinate from L-kynurenine: step 1/3. Functionally, catalyzes the hydroxylation of L-kynurenine (L-Kyn) to form 3-hydroxy-L-kynurenine (L-3OHKyn). Required for synthesis of quinolinic acid. The protein is Kynurenine 3-monooxygenase of Xanthomonas oryzae pv. oryzae (strain KACC10331 / KXO85).